A 349-amino-acid chain; its full sequence is MGASENLGQGPPPPHSRKRARELVLGLQDEICNELESLDGGQSFRTDSWERPEGGGGRSKVMREGRVFEQGGVNFSEVHGEELPPSILNQRPEAKGHPWFATGTSMVLHPRNPYVPTIHLNYRYFEAGPVWWFGGGADLTPFYPYLEDARHFHRVHKQACDTVGPELHKVFKPWCDEYFYLKHRGETRGVGGIFYDYQDGSGVLYKGQNSEGPAAQVSRELGPHPKSWEQLFELAKACGKAFLPAYVPIVEKRQEQAYGDRERQFQLYRRGRYAEFNLVWDRGTIFGLQTNGRTESILMSLPPLARWEYGYVAPADSREALLTDLFTRPQNWFEDATLEERCRPHQAVD.

Disordered regions lie at residues 1 to 21 (MGAS…KRAR) and 37 to 60 (SLDG…GRSK). S105 serves as a coordination point for substrate. A divalent metal cation contacts are provided by H109 and H119. H119 acts as the Proton donor in catalysis. 121–123 (NYR) provides a ligand contact to substrate. A divalent metal cation is bound by residues H153 and H183. The important for dimerization stretch occupies residues 273 to 308 (YAEFNLVWDRGTIFGLQTNGRTESILMSLPPLARWE).

This sequence belongs to the aerobic coproporphyrinogen-III oxidase family. Homodimer. A divalent metal cation serves as cofactor.

It is found in the cytoplasm. It catalyses the reaction coproporphyrinogen III + O2 + 2 H(+) = protoporphyrinogen IX + 2 CO2 + 2 H2O. It participates in porphyrin-containing compound metabolism; protoporphyrin-IX biosynthesis; protoporphyrinogen-IX from coproporphyrinogen-III (O2 route): step 1/1. Its function is as follows. Involved in the heme and chlorophyll biosynthesis. Catalyzes the aerobic oxidative decarboxylation of propionate groups of rings A and B of coproporphyrinogen-III to yield the vinyl groups in protoporphyrinogen-IX. This Prochlorococcus marinus (strain MIT 9313) protein is Oxygen-dependent coproporphyrinogen-III oxidase.